The following is a 786-amino-acid chain: LPS-assembly protein LptD (786 aa).

An N-terminal signal peptide occupies residues 1–24 (MKKRIPTLLATMIASALYSHQGLA). 2 disulfide bridges follow: Cys-31/Cys-726 and Cys-173/Cys-727.

The protein belongs to the LptD family. Component of the lipopolysaccharide transport and assembly complex. Interacts with LptE and LptA. Contains two intramolecular disulfide bonds.

The protein resides in the cell outer membrane. In terms of biological role, together with LptE, is involved in the assembly of lipopolysaccharide (LPS) at the surface of the outer membrane. This Salmonella choleraesuis (strain SC-B67) protein is LPS-assembly protein LptD.